The following is a 321-amino-acid chain: Probable heme-iron transport system permease protein IsdF (321 aa).

The next 9 membrane-spanning stretches (helical) occupy residues 9–29 (LLFL…FVTG), 61–81 (ILIA…LQAA), 89–109 (ANII…MLFI), 114–134 (FYLP…IILL), 143–163 (VSMI…LEIL), 179–199 (IWSD…LTLL), 233–253 (VFLA…GIIV), 267–287 (LIPF…LLGR), and 294–314 (EIPA…YLIC).

The protein belongs to the binding-protein-dependent transport system permease family. FecCD subfamily.

It is found in the cell membrane. In terms of biological role, part of the binding-protein-dependent transport system for heme-iron. Responsible for the translocation of the substrate across the membrane. The sequence is that of Probable heme-iron transport system permease protein IsdF (isdF) from Staphylococcus aureus (strain NCTC 8325 / PS 47).